The following is a 172-amino-acid chain: Sec-independent protein translocase protein TatB (172 aa).

The helical transmembrane segment at 1 to 21 (MIDLGISKLALIGAVALVVIG) threads the bilayer. The tract at residues 97–129 (GDPASRQTATQAAEWRPAPAKSRNGRNSWRNKQ) is disordered.

This sequence belongs to the TatB family. In terms of assembly, the Tat system comprises two distinct complexes: a TatABC complex, containing multiple copies of TatA, TatB and TatC subunits, and a separate TatA complex, containing only TatA subunits. Substrates initially bind to the TatABC complex, which probably triggers association of the separate TatA complex to form the active translocon.

The protein localises to the cell inner membrane. Its function is as follows. Part of the twin-arginine translocation (Tat) system that transports large folded proteins containing a characteristic twin-arginine motif in their signal peptide across membranes. Together with TatC, TatB is part of a receptor directly interacting with Tat signal peptides. TatB may form an oligomeric binding site that transiently accommodates folded Tat precursor proteins before their translocation. This is Sec-independent protein translocase protein TatB from Ralstonia nicotianae (strain ATCC BAA-1114 / GMI1000) (Ralstonia solanacearum).